We begin with the raw amino-acid sequence, 447 residues long: N-succinylarginine dihydrolase (447 aa).

Residues 19 to 28 (AGLSFGNEAS), Asn110, and 137 to 138 (HR) contribute to the substrate site. Residue Glu174 is part of the active site. Residue Arg212 coordinates substrate. His248 is a catalytic residue. Asp250 and Asn359 together coordinate substrate. Cys365 functions as the Nucleophile in the catalytic mechanism.

It belongs to the succinylarginine dihydrolase family. In terms of assembly, homodimer.

It carries out the reaction N(2)-succinyl-L-arginine + 2 H2O + 2 H(+) = N(2)-succinyl-L-ornithine + 2 NH4(+) + CO2. It functions in the pathway amino-acid degradation; L-arginine degradation via AST pathway; L-glutamate and succinate from L-arginine: step 2/5. In terms of biological role, catalyzes the hydrolysis of N(2)-succinylarginine into N(2)-succinylornithine, ammonia and CO(2). The protein is N-succinylarginine dihydrolase of Escherichia coli O7:K1 (strain IAI39 / ExPEC).